Here is a 105-residue protein sequence, read N- to C-terminus: Nitrogenase-stabilizing/protective protein NifW (105 aa).

Belongs to the NifW family. As to quaternary structure, homotrimer; associates with NifD.

Its function is as follows. May protect the nitrogenase Fe-Mo protein from oxidative damage. This is Nitrogenase-stabilizing/protective protein NifW from Rhodospirillum centenum (strain ATCC 51521 / SW).